A 602-amino-acid polypeptide reads, in one-letter code: Sodium- and chloride-dependent GABA transporter 2 (602 aa).

Residues 1 to 40 (MENRASGTTSNGETKPVCPAMEKVEEDGTLEREHWNNKME) are Cytoplasmic-facing. A run of 3 helical transmembrane segments spans residues 41–61 (FVLSVAGEIIGLGNVWRFPYL), 68–88 (GAFFIPYLIFLFTCGIPVFFL), and 121–141 (IVSLLNVYYIVVLAWALFYLF). Topologically, residues 142-206 (SSFTTDLPWG…GIQHLGSLRW (65 aa)) are extracellular. A disulfide bridge connects residues Cys153 and Cys162. 3 N-linked (GlcNAc...) asparagine glycosylation sites follow: Asn169, Asn173, and Asn178. The next 2 membrane-spanning stretches (helical) occupy residues 207-227 (ELVLCLLLAWIICYFCIWKGV) and 233-253 (VVYFTATFPYLMLVVLLIRGV). Residue Asn269 is glycosylated (N-linked (GlcNAc...) asparagine). Transmembrane regions (helical) follow at residues 282–302 (AGTQIFFSFAICLGCLTALGS), 319–339 (ILNSSTSFMAGFAIFSILGFM), 366–386 (VVMLPFSPLWACCFFFMVVLL), 418–438 (VLILIVSVISFFIGLIMLTEG), 453–473 (GMCLLFVAIFESLCVAWVYGA), 490–510 (PLIKYCWLFFTPAVCLATFLF), and 528–548 (WWGDALGWLLALSSMICIPAW). At 549–602 (SIYKLRTLKGPLRERLRQLVCPAEDLPQKNQPEPTAPATPMTSLLRLTELESNC) the chain is on the cytoplasmic side. Thr587 carries the phosphothreonine modification. Residue Ser591 is modified to Phosphoserine.

The protein belongs to the sodium:neurotransmitter symporter (SNF) (TC 2.A.22) family. SLC6A13 subfamily. In terms of tissue distribution, expressed at high levels in liver, followed by kidney and leptomeninges, and very low levels in the cerebellum (at protein level). In the brain, detected in some blood vessels (at protein level). In the kidney, expressed in the cortex, including parts of the proximal tubules, but not in the medulla (at protein level). In the liver, highest expression in periportal hepatocytes, with highest density at the vascular side (at protein level). Also detected at low levels in other organs, including skeletal muscle.

The protein resides in the cell membrane. It localises to the basolateral cell membrane. It carries out the reaction 4-aminobutanoate(out) + chloride(out) + 2 Na(+)(out) = 4-aminobutanoate(in) + chloride(in) + 2 Na(+)(in). The catalysed reaction is taurine(out) + chloride(out) + 2 Na(+)(out) = taurine(in) + chloride(in) + 2 Na(+)(in). The enzyme catalyses beta-alanine(out) + chloride(out) + 2 Na(+)(out) = beta-alanine(in) + chloride(in) + 2 Na(+)(in). It catalyses the reaction hypotaurine(out) + chloride(out) + 2 Na(+)(out) = hypotaurine(in) + chloride(in) + 2 Na(+)(in). Its activity is regulated as follows. Gamma-aminobutyric acid (GABA) transport is inhibited by beta-alanine, taurine, hypotaurine, beta-guanidinopropionic acid, 2,3-diaminopropionic acid, guvacine and nipecotic acid. Beta-alanine transport is inhibited by GABA. Taurine transport is inhibited by GABA, beta-alanine, SNAP-5114, nigericin, nipecotic acid and ouabain. In terms of biological role, mediates sodium- and chloride-dependent transport of gamma-aminobutyric acid (GABA). Can also mediate transport of beta-alanine, taurine and hypotaurine and is the major taurine transporter in hepatocytes. This chain is Sodium- and chloride-dependent GABA transporter 2 (Slc6a13), found in Mus musculus (Mouse).